Here is a 168-residue protein sequence, read N- to C-terminus: Phosphopantetheine adenylyltransferase (168 aa).

Position 13 (T13) interacts with substrate. ATP contacts are provided by residues 13 to 14 (TF) and H21. The substrate site is built by K45, L78, and R92. ATP contacts are provided by residues 93–95 (GLR), E103, and 128–134 (TQFISSG).

This sequence belongs to the bacterial CoaD family. As to quaternary structure, homohexamer. Requires Mg(2+) as cofactor.

It localises to the cytoplasm. The catalysed reaction is (R)-4'-phosphopantetheine + ATP + H(+) = 3'-dephospho-CoA + diphosphate. It participates in cofactor biosynthesis; coenzyme A biosynthesis; CoA from (R)-pantothenate: step 4/5. Reversibly transfers an adenylyl group from ATP to 4'-phosphopantetheine, yielding dephospho-CoA (dPCoA) and pyrophosphate. This chain is Phosphopantetheine adenylyltransferase, found in Wolbachia sp. subsp. Drosophila simulans (strain wRi).